A 375-amino-acid polypeptide reads, in one-letter code: MAIYWIVSYSILVFCFFELAMINQASEAKTKILINYFFLIGVFALILFAGIRGPDSGMDDSQYVGFFHDFSRQTGMTGYQAVANIYRYENFFMVLAWVASCFTHESYFFLLFISFIAVSTNAWVYKKYSPLILCSLCLYSAHLFINKDMNQIRFGLCSAFAIAFICSLVARNYLLALLFIVLSTQSHSTGYTIVMIIPFFFIRERKYLPLVLVIASIPLGIIGGKKLFLDSLGIVPVLGERAASYSGTNFDTTSPVFGLANLKNIAFIGAFTLYYFRKGIMKEDRFVYILLIAYSIGAAVRITFSDFSIFGGRVGNLFLHTEPLLFAFLMLRIRNLLLNFFMLFSITTYYLAYNTILSAQSIMGYSVAPLFRIFS.

9 consecutive transmembrane segments (helical) span residues 2–22, 31–51, 93–113, 162–182, 208–228, 256–276, 287–307, 309–329, and 337–357; these read AIYWIVSYSILVFCFFELAMI, KILINYFFLIGVFALILFAGI, MVLAWVASCFTHESYFFLLFI, IAFICSLVARNYLLALLFIVL, LPLVLVIASIPLGIIGGKKLF, VFGLANLKNIAFIGAFTLYYF, VYILLIAYSIGAAVRITFSDF, IFGGRVGNLFLHTEPLLFAFL, and LLNFFMLFSITTYYLAYNTIL.

The protein resides in the cell membrane. It participates in glycan metabolism; exopolysaccharide biosynthesis. Its function is as follows. Involved in the biosynthesis of amylovoran which functions as a virulence factor. This chain is Amylovoran biosynthesis protein AmsC (amsC), found in Erwinia amylovora (Fire blight bacteria).